Consider the following 641-residue polypeptide: Bifunctional protein glk (641 aa).

The tract at residues 1–340 (MSTGAQTKAA…QLSNRTGGAS (340 aa)) is glucokinase. 23–28 (ADVGGT) is an ATP binding site. One can recognise an HTH rpiR-type domain in the interval 341–417 (SAVFERIRQM…LKLATGLTGT (77 aa)). The tract at residues 341 to 641 (SAVFERIRQM…SHGAAPAAKD (301 aa)) is putative HTH-type transcriptional regulator. A DNA-binding region (H-T-H motif) is located at residues 377–396 (IVNIARKADVSQPTVIRFCR). Positions 461 to 600 (AIDILNNARR…AVGVAIRRAA (140 aa)) constitute an SIS domain. A helical transmembrane segment spans residues 576–596 (SMISRILHLVMIDILAVGVAI).

It in the N-terminal section; belongs to the bacterial glucokinase family.

The protein resides in the membrane. It catalyses the reaction D-glucose + ATP = D-glucose 6-phosphate + ADP + H(+). The chain is Bifunctional protein glk (glk) from Burkholderia mallei (strain ATCC 23344).